A 152-amino-acid chain; its full sequence is Transcriptional regulator MraZ (152 aa).

SpoVT-AbrB domains follow at residues L5 to Q52 and A81 to Q124.

This sequence belongs to the MraZ family. As to quaternary structure, forms oligomers.

Its subcellular location is the cytoplasm. It localises to the nucleoid. This Coxiella burnetii (strain Dugway 5J108-111) protein is Transcriptional regulator MraZ.